The following is a 266-amino-acid chain: Apolipoprotein A-I (266 aa).

Residues 1–18 (MKAVVLTLAVLFLTGSQA) form the signal peptide. 2 tandem repeats follow at residues 67-88 (LKLL…EQIG) and 89-110 (PVTQ…QEMN). The 10 X approximate tandem repeats stretch occupies residues 67–266 (LKLLDNWDSL…DEATKKLNSQ (200 aa)). M109 is subject to Methionine sulfoxide. Residues 111–121 (KDLEEVKKKVQ) form a 3; half-length repeat. Tandem repeats lie at residues 122-143 (PYLD…QKVA), 144-165 (PLGA…EKLS), 166-187 (PLGE…AQLA), 188-209 (PYGE…EGGG), and 210-231 (AALT…EKAK). Residues 232 to 242 (PALEDLRQGLL) form a 9; half-length repeat. Repeat unit 10 spans residues 243–266 (PVLENFRVSLLAAVDEATKKLNSQ).

Belongs to the apolipoprotein A1/A4/E family. As to quaternary structure, homodimer. Interacts with APOA1BP and CLU. Component of a sperm activating protein complex (SPAP), consisting of APOA1, an immunoglobulin heavy chain, an immunoglobulin light chain and albumin. Interacts with NDRG1. Interacts with SCGB3A2. Interacts with NAXE and YJEFN3. Glycosylated. Post-translationally, palmitoylated. In terms of processing, phosphorylation sites are present in the extracellular medium.

It is found in the secreted. Participates in the reverse transport of cholesterol from tissues to the liver for excretion by promoting cholesterol efflux from tissues and by acting as a cofactor for the lecithin cholesterol acyltransferase (LCAT). As part of the SPAP complex, activates spermatozoa motility. In Leptonychotes weddellii (Weddell seal), this protein is Apolipoprotein A-I (APOA1).